We begin with the raw amino-acid sequence, 492 residues long: Proline--tRNA ligase (492 aa).

Belongs to the class-II aminoacyl-tRNA synthetase family. ProS type 3 subfamily. As to quaternary structure, homodimer.

The protein resides in the cytoplasm. It catalyses the reaction tRNA(Pro) + L-proline + ATP = L-prolyl-tRNA(Pro) + AMP + diphosphate. Catalyzes the attachment of proline to tRNA(Pro) in a two-step reaction: proline is first activated by ATP to form Pro-AMP and then transferred to the acceptor end of tRNA(Pro). The sequence is that of Proline--tRNA ligase from Flavobacterium johnsoniae (strain ATCC 17061 / DSM 2064 / JCM 8514 / BCRC 14874 / CCUG 350202 / NBRC 14942 / NCIMB 11054 / UW101) (Cytophaga johnsonae).